The sequence spans 949 residues: Bifunctional uridylyltransferase/uridylyl-removing enzyme (949 aa).

The interval 1–377 is uridylyltransferase; the sequence is MARHETSFPE…RFRNRVRKIA (377 aa). The uridylyl-removing stretch occupies residues 378-733; sequence GTLDFVDDGG…VRTHDFHAIT (356 aa). Residues 494–610 form the HD domain; sequence VDEHLLRSVD…VDFAERVQSL (117 aa). ACT domains lie at 734–816 and 845–926; these read EITV…VIAS and VIEV…ERMP. Residues 926-949 form a disordered region; it reads PSGIIAPTPVSRVPHGSKTTKAET.

Belongs to the GlnD family. The cofactor is Mg(2+).

It carries out the reaction [protein-PII]-L-tyrosine + UTP = [protein-PII]-uridylyl-L-tyrosine + diphosphate. It catalyses the reaction [protein-PII]-uridylyl-L-tyrosine + H2O = [protein-PII]-L-tyrosine + UMP + H(+). Its activity is regulated as follows. Uridylyltransferase (UTase) activity is inhibited by glutamine, while glutamine activates uridylyl-removing (UR) activity. Functionally, modifies, by uridylylation and deuridylylation, the PII regulatory proteins (GlnB and homologs), in response to the nitrogen status of the cell that GlnD senses through the glutamine level. Under low glutamine levels, catalyzes the conversion of the PII proteins and UTP to PII-UMP and PPi, while under higher glutamine levels, GlnD hydrolyzes PII-UMP to PII and UMP (deuridylylation). Thus, controls uridylylation state and activity of the PII proteins, and plays an important role in the regulation of nitrogen fixation and metabolism. This is Bifunctional uridylyltransferase/uridylyl-removing enzyme from Rhizobium meliloti (strain 1021) (Ensifer meliloti).